Reading from the N-terminus, the 320-residue chain is o-succinylbenzoate synthase (320 aa).

Catalysis depends on K133, which acts as the Proton donor. Residues D161, E190, and D213 each coordinate Mg(2+). The active-site Proton acceptor is the K235.

This sequence belongs to the mandelate racemase/muconate lactonizing enzyme family. MenC type 1 subfamily. A divalent metal cation serves as cofactor.

It catalyses the reaction (1R,6R)-6-hydroxy-2-succinyl-cyclohexa-2,4-diene-1-carboxylate = 2-succinylbenzoate + H2O. It participates in quinol/quinone metabolism; 1,4-dihydroxy-2-naphthoate biosynthesis; 1,4-dihydroxy-2-naphthoate from chorismate: step 4/7. The protein operates within quinol/quinone metabolism; menaquinone biosynthesis. Functionally, converts 2-succinyl-6-hydroxy-2,4-cyclohexadiene-1-carboxylate (SHCHC) to 2-succinylbenzoate (OSB). In Escherichia coli O81 (strain ED1a), this protein is o-succinylbenzoate synthase.